Here is an 805-residue protein sequence, read N- to C-terminus: MVDKLIVAVEGTAVLGPYWKIIVSDYLDKIIRCFFGVDSTSQKSSAADVEVSMVMFNTHGPYSACLVQRSGWTKDMDTFLQWLSAIPFSGGGFNDAAVAEGLAEALVMFSVPNGNQTQQKMEGKKHCILISGSNPYPLPTPVYRPQMQKLEQNENIEAQTDSRLADAETVAKTFPQCSISLSVICPKKLPKLRAIYDAGKHNPRAADPPIDTAKNPNFLVLISENFIEARAAFSRSGLTNLASNHSPVKMDVSSVLPVSGTQSISNSAANVSVISRPPISAGNIPPATVKIEPNTVTPMTGPGFSHIPSVRPALQPVPSLQASSPLSVSQEMVSHTENVQEMKPIVSGMTQSLRPVAAAAANVKILNGVAQAHQVLGGGTSIGLQSMGGTPMLSSMISSGMASSVPASQAVLSSGQSGVTTMTGAVPLAGSAQNTQNSAPSSFTSTAPSMSGQTVPAMSQGNIPGTQMMPSGTGMNQNMLTGLGATGLPSGTGTMMPTPGMSQQGQPGMQPVGVNSTSANMPLSQQQTSGALPSAQSKYVKVWEGNLSGQRQGQPVFITRLEGYRSASASESLAANWPPTMQIVRLISQDHMNNKQYVGKADFLVFRAMNQHGFLSQLQEKKLCAVIQLPSQTLLLSVSDKACRLIGMLFPGDMVVFKPQIPSQQQQQQQQQQLQAQHPQLQQQQQQQQQHLTQLQQQPLQQLQQQQQQQPLMQLQQQQQIPLQQSQVPQMQQQQIHQMQQQQQIPQMQQQQQIPQMQQQQQQQPMVGTGMNQTYMQGPARSQLMSQSQGSSQGLPITPGGGFMN.

Disordered regions lie at residues G430–V455 and S786–N805. 2 stretches are compositionally biased toward low complexity: residues S438–S451 and S786–L795.

Belongs to the Mediator complex subunit 25 family. In terms of assembly, interacts with MYC2 (via N-terminus). MED25 competes with JAZ7 for binding to MYC2.

In terms of biological role, component of the Mediator complex, a coactivator involved in the regulated transcription of nearly all RNA polymerase II-dependent genes. Mediator functions as a bridge to convey information from gene-specific regulatory proteins to the basal RNA polymerase II transcription machinery. Mediator is recruited to promoters by direct interactions with regulatory proteins and serves as a scaffold for the assembly of a functional pre-initiation complex with RNA polymerase II and the general transcription factors. Plays a positive role in wound-induced activation of jasmonate-responsive genes whose promoters are targeted by MYC2. The protein is Mediator of RNA polymerase II transcription subunit 25 of Solanum lycopersicum (Tomato).